Consider the following 113-residue polypeptide: MKSLLVLALLAFGAVLVSAHHLEMCEKSTDELREQLVCHRQHATGAFNAKLDQVNRQLRCNNDICTFKKLCDAPDFLTELRKYFTESEINELHELANQCDPDAHHDHPHCHPH.

A signal peptide spans 1 to 19; the sequence is MKSLLVLALLAFGAVLVSA. 3 disulfides stabilise this stretch: Cys25–Cys71, Cys38–Cys99, and Cys60–Cys65.

Its subcellular location is the secreted. Has bacteriostatic activity against Gram-positive bacteria, but not against Gram-negative bacteria. Has fungistatic activity against some but not all fungi. Binds and sequesters copper and iron ions. Copper-chelating activity is crucial for antimicrobial activity against M.luteus. The polypeptide is Antimicrobial peptide microplusin (Argas monolakensis (Mono lake bird tick)).